Reading from the N-terminus, the 269-residue chain is Zinc finger protein SNAI2 (269 aa).

The segment at 1 to 20 is SNAG domain; that stretch reads MPRSFLVKKHFNASKKPNYS. The disordered stretch occupies residues 81 to 117; sequence SSSLGRVSPPPSSDTSSKDHSGSESPISDEEERLQPK. 4 consecutive C2H2-type zinc fingers follow at residues 129–151, 160–182, 186–208, and 214–236; these read FQCNLCNKTYSTFSGLAKHKQLH, FSCKYCDKEYVSLGALKMHIRTH, CVCKICGKAFSRPWLLQGHIRTH, and FSCPHCNRAFADRSNLRAHLQTH. A C2H2-type 5; atypical zinc finger spans residues 242–265; sequence YQCKNCSKTFSRMSLLHKHEESGC.

Belongs to the snail C2H2-type zinc-finger protein family. Interacts (via SNAG domain) with LIMD1 (via LIM domains), WTIP (via LIM domains) and AJUBA (via LIM domains). Interacts (via zinc fingers) with KPNA2, KPNB1, and TNPO1. May interact (via zinc fingers) with IPO7. In terms of processing, phosphorylated by GSK3B. Once phosphorylated, it becomes a target for ubiquitination. Post-translationally, ubiquitinated by the SCF(FBXO11) complex; ubiquitination requires previous GSK3B-mediated SNAI2 phosphorylation.

Its subcellular location is the nucleus. It localises to the cytoplasm. Functionally, transcriptional repressor that modulates both activator-dependent and basal transcription. Involved in the generation and migration of neural crest cells. Plays a role in mediating RAF1-induced transcriptional repression of the TJ protein, occludin (OCLN) and subsequent oncogenic transformation of epithelial cells. Represses BRCA2 expression by binding to its E2-box-containing silencer and recruiting CTBP1 and HDAC1 in breast cells. In epidermal keratinocytes, binds to the E-box in ITGA3 promoter and represses its transcription. Involved in the regulation of ITGB1 and ITGB4 expression and cell adhesion and proliferation in epidermal keratinocytes. Binds to E-box2 domain of BSG and activates its expression during TGFB1-induced epithelial-mesenchymal transition (EMT) in hepatocytes. Represses E-Cadherin/CDH1 transcription via E-box elements. Involved in osteoblast maturation. Binds to RUNX2 and SOC9 promoters and may act as a positive and negative transcription regulator, respectively, in osteoblasts. Binds to CXCL12 promoter via E-box regions in mesenchymal stem cells and osteoblasts. Plays an essential role in TWIST1-induced EMT and its ability to promote invasion and metastasis. The chain is Zinc finger protein SNAI2 (Snai2) from Mus musculus (Mouse).